A 314-amino-acid chain; its full sequence is Acetyl-coenzyme A carboxylase carboxyl transferase subunit beta (314 aa).

Residues 25–294 form the CoA carboxyltransferase N-terminal domain; the sequence is VWTKCDSCSQ…PGTKPIVAEF (270 aa). Positions 29, 32, 48, and 51 each coordinate Zn(2+). The C4-type zinc-finger motif lies at 29 to 51; it reads CDSCSQVLYRAELERNLEVCPKC.

It belongs to the AccD/PCCB family. As to quaternary structure, acetyl-CoA carboxylase is a heterohexamer composed of biotin carboxyl carrier protein (AccB), biotin carboxylase (AccC) and two subunits each of ACCase subunit alpha (AccA) and ACCase subunit beta (AccD). The cofactor is Zn(2+).

The protein localises to the cytoplasm. The enzyme catalyses N(6)-carboxybiotinyl-L-lysyl-[protein] + acetyl-CoA = N(6)-biotinyl-L-lysyl-[protein] + malonyl-CoA. It functions in the pathway lipid metabolism; malonyl-CoA biosynthesis; malonyl-CoA from acetyl-CoA: step 1/1. Its function is as follows. Component of the acetyl coenzyme A carboxylase (ACC) complex. Biotin carboxylase (BC) catalyzes the carboxylation of biotin on its carrier protein (BCCP) and then the CO(2) group is transferred by the transcarboxylase to acetyl-CoA to form malonyl-CoA. This chain is Acetyl-coenzyme A carboxylase carboxyl transferase subunit beta, found in Photorhabdus laumondii subsp. laumondii (strain DSM 15139 / CIP 105565 / TT01) (Photorhabdus luminescens subsp. laumondii).